We begin with the raw amino-acid sequence, 244 residues long: CTD nuclear envelope phosphatase 1 (244 aa).

A helical transmembrane segment spans residues 7 to 29 (LLGLRGFVAFAAKLWSFVLYLLR). The 168-residue stretch at 58 to 225 (QVKRKVLVLD…NLLPMLDALR (168 aa)) folds into the FCP1 homology domain.

It belongs to the dullard family. Interacts with bmpr1a, bmpr1b and bmpr2.

It is found in the membrane. The protein resides in the cytoplasm. Its subcellular location is the perinuclear region. The catalysed reaction is O-phospho-L-seryl-[protein] + H2O = L-seryl-[protein] + phosphate. The enzyme catalyses O-phospho-L-threonyl-[protein] + H2O = L-threonyl-[protein] + phosphate. In terms of biological role, serine/threonine protein phosphatase that may dephosphorylate and activate lipins. Lipins are phosphatidate phosphatases that catalyze the conversion of phosphatidic acid to diacylglycerol and control the metabolism of fatty acids at different levels. May indirectly modulate the lipid composition of nuclear and/or endoplasmic reticulum membranes and be required for proper nuclear membrane morphology and/or dynamics. May also indirectly regulate the production of lipid droplets and triacylglycerol. Induces neuronal differentiation by antagonizing BMP signaling. Acts both by dephosphorylating BMPR1A and by promoting BMPR2 proteasomal degradation. This Xenopus laevis (African clawed frog) protein is CTD nuclear envelope phosphatase 1 (ctdnep1).